The sequence spans 325 residues: NADH-quinone oxidoreductase subunit H (325 aa).

8 helical membrane passes run 11–31 (ILLS…CGAF), 81–101 (VIFT…FAIV), 114–134 (IGIL…LFAG), 154–174 (LSYE…AGSF), 186–206 (IWNV…GVAV), 237–257 (FFVG…TLFF), 265–285 (LPPF…FILI), and 304–324 (VCLP…LWQA).

This sequence belongs to the complex I subunit 1 family. In terms of assembly, NDH-1 is composed of 13 different subunits. Subunits NuoA, H, J, K, L, M, N constitute the membrane sector of the complex.

The protein localises to the cell inner membrane. It catalyses the reaction a quinone + NADH + 5 H(+)(in) = a quinol + NAD(+) + 4 H(+)(out). In terms of biological role, NDH-1 shuttles electrons from NADH, via FMN and iron-sulfur (Fe-S) centers, to quinones in the respiratory chain. The immediate electron acceptor for the enzyme in this species is believed to be ubiquinone. Couples the redox reaction to proton translocation (for every two electrons transferred, four hydrogen ions are translocated across the cytoplasmic membrane), and thus conserves the redox energy in a proton gradient. This subunit may bind ubiquinone. The chain is NADH-quinone oxidoreductase subunit H from Enterobacter sp. (strain 638).